The following is a 255-amino-acid chain: Probable septum site-determining protein MinC (255 aa).

Positions 103-115 (SHGRRPRGERSEE) are enriched in basic and acidic residues. The segment at 103-136 (SHGRRPRGERSEEAAEAVPAAAEPVPAPAASPAP) is disordered. The span at 127 to 136 (VPAPAASPAP) shows a compositional bias: pro residues.

This sequence belongs to the MinC family. As to quaternary structure, interacts with MinD and FtsZ.

Its function is as follows. Cell division inhibitor that blocks the formation of polar Z ring septums. Rapidly oscillates between the poles of the cell to destabilize FtsZ filaments that have formed before they mature into polar Z rings. Prevents FtsZ polymerization. This Ralstonia nicotianae (strain ATCC BAA-1114 / GMI1000) (Ralstonia solanacearum) protein is Probable septum site-determining protein MinC.